The sequence spans 1040 residues: MKEIKGKVDFREMDKEIKEFWENNEIYQKVKKLNENYPDYYFVDGPPYCSGSIHLGTAWNKTIKDTVLRFKRMQNYNVLDKAGWDMHGLPIEVKVEHEFNLQSKKDIETKVGTDVFIEKCKEFALNNKEVMENQFKNLGIWLDWENAYLPIKNDYIEAGWWSLKRAHEKELLSKDLRVGYWCPRCETSLAEHEVRGEYQDVLDPSVYVKFKVADDNSYPNTYFVIWTTTPWTLISNLLIAVNPEFDYGFVEVIFDNERKETWVIAEALVEAVIKLAKKQNNIKSYNIVKKVKGKELEGIKYVPALLEENERQKEFFQLEKVHTIVLGEHVSLDGGTGLVHTAPGFGEEDFEVGKKYNSPIYSPIDDEGKYVEGKWKGVFVKDADEDIIATLTDKNLIVNAGKKKHTYPHCWRCKTPLLFRSTEQWFLNISKIKNNIVEHAKNTDWVPNWVETRYINGVKFVGDWNISRQRYWGIPLPIWICENKDCGKYKIIGSVEELKQEMINDIPINDDLHKPTVDKIIMKCDCGCEMKRTPDVLDVWYDSGLAPYASINAKELKKADFIVEGNDQVTKWFYSQHALSEIVFDDIPYKKCMMHGFTLDETGEKMSKSIGNVVNPDDVVEEFGADLLRFYLLSANKAWEDLRFSIGEMNDVKSVFNTLWNSYSFAVNYMVLDDFSPNEEYFNYLRDEDKWIISKINSLTKEAIEVLEIPHLHEYTWKVRDFILNDLSRWYIKLIRNRTWMEKEDPDKLSAYQTLYYVLMKLVVILAPVAPHISEKIYQNLKIEGMPQSIFMTKIVVEEEYINKEVEEGIETAREIVDAILKGRDKVKYTLRYPISKIILPNELGDIVNKYHYIIKEQGNVKNIEVKEFEGNISLKPNFRTLGASFKSDVPAVVKILNSQNPKELKDKLAEGEITIDGFTIKPEHVEFKIDIPDNIVGMELRKGSVYIDIELTEEIIKDGLKREVIRRIQSMRKDMDLDIEEKIKITMEGIEFNEDALKDIEKEVRGTFEPTIECDNIQEWNIKTPNGEVYNLKIGVKKN.

The 'HIGH' region signature appears at 47–57 (PYCSGSIHLGT). Positions 605 to 609 (KMSKS) match the 'KMSKS' region motif. Residue Lys-608 participates in ATP binding.

The protein belongs to the class-I aminoacyl-tRNA synthetase family. IleS type 2 subfamily. In terms of assembly, monomer. The cofactor is Zn(2+).

The protein resides in the cytoplasm. It catalyses the reaction tRNA(Ile) + L-isoleucine + ATP = L-isoleucyl-tRNA(Ile) + AMP + diphosphate. Catalyzes the attachment of isoleucine to tRNA(Ile). As IleRS can inadvertently accommodate and process structurally similar amino acids such as valine, to avoid such errors it has two additional distinct tRNA(Ile)-dependent editing activities. One activity is designated as 'pretransfer' editing and involves the hydrolysis of activated Val-AMP. The other activity is designated 'posttransfer' editing and involves deacylation of mischarged Val-tRNA(Ile). The protein is Isoleucine--tRNA ligase of Methanococcus aeolicus (strain ATCC BAA-1280 / DSM 17508 / OCM 812 / Nankai-3).